A 1086-amino-acid polypeptide reads, in one-letter code: NAD(P) transhydrogenase, mitochondrial (1086 aa).

A mitochondrion-targeting transit peptide spans 1–43; sequence MANLLKTVVTGCSCPFLSNLGSCKVLPGKKNFLRAFHTHRILW. The Mitochondrial matrix portion of the chain corresponds to 44–474; the sequence is CKAPVKPGIP…TITPFRKTMT (431 aa). N6-acetyllysine is present on K70. At K117 the chain carries N6-succinyllysine. NAD(+) is bound at residue 182–184; the sequence is RVT. At K224 the chain carries N6-succinyllysine. NAD(+) is bound by residues V237, 257–259, and G287; that span reads DTR. An N6-succinyllysine modification is found at K294. The NAD(+) site is built by E300 and L319. At K331 the chain carries N6-succinyllysine. At K397 the chain carries N6-acetyllysine. A run of 4 helical transmembrane segments spans residues 475 to 493, 501 to 521, 527 to 546, and 558 to 578; these read SASV…GIAA, MVTT…GVTP, LMSV…LVLM, and GLAA…FLVT. Residues 579 to 595 are Mitochondrial matrix-facing; sequence QRMLDMFKRPTDPPEYN. A run of 5 helical transmembrane segments spans residues 596-616, 622-642, 646-666, 672-691, and 702-722; these read YLYL…LYSG, IMYL…STQG, LGNA…LGGL, LLAQ…LTIA, and LVAA…IAEY. At 723–739 the chain is on the cytoplasmic side; that stretch reads IIEYPHFATDAAANLTK. 5 consecutive transmembrane segments (helical) span residues 740-760, 778-797, 801-819, 833-853, and 857-879; these read IVAY…LVAY, HLLN…PFMM, FTTG…AVMG, VVIT…GFLL, and LLTI…MCVA. Residues 880-1086 are Mitochondrial matrix-facing; sequence MNRSLANVIL…QAKVRESYQK (207 aa). NADP(+) is bound by residues Y933, 965–970, 1007–1011, 1026–1027, 1042–1049, and 1068–1069; these read VAGRMP, GANDT, GM, KRSLGVGY, and DA. An N6-succinyllysine modification is found at K1079.

The protein in the N-terminal section; belongs to the AlaDH/PNT family. It in the C-terminal section; belongs to the PNT beta subunit family. In terms of assembly, homodimer.

It is found in the mitochondrion inner membrane. The catalysed reaction is NAD(+) + NADPH + H(+)(in) = NADH + NADP(+) + H(+)(out). In terms of biological role, the transhydrogenation between NADH and NADP is coupled to respiration and ATP hydrolysis and functions as a proton pump across the membrane. May play a role in reactive oxygen species (ROS) detoxification in the adrenal gland. This chain is NAD(P) transhydrogenase, mitochondrial (NNT), found in Ovis aries (Sheep).